Here is a 1317-residue protein sequence, read N- to C-terminus: WASH complex subunit 2 (1317 aa).

Positions 1–219 (MNRTSPDSER…VGSDRGSIVD (219 aa)) are sufficient for interaction with WASHC3, WASHC4 and WASHC5; required for interaction with WASHC1. Phosphoserine occurs at positions 157, 159, 204, 205, and 209. Low complexity predominate over residues 201–213 (GELSSEEGSVGSD). Positions 201–630 (GELSSEEGSV…RKSKGELWDS (430 aa)) are disordered. Acidic residues-rich tracts occupy residues 219-232 (DSEE…SDED) and 250-274 (DEEE…EDIE). Ser-284 is modified (phosphoserine). 2 stretches are compositionally biased toward basic and acidic residues: residues 289–325 (LAAR…RTPP) and 366–376 (DLFRETSRDRP). A Phosphothreonine modification is found at Thr-323. The sufficient for interaction with CCDC93 stretch occupies residues 348–582 (SRGGLFSGQG…QVSSQQPQSQ (235 aa)). Positions 349 to 1317 (RGGLFSGQGL…DDPLNAFGSQ (969 aa)) are interaction with VPS35. Positions 358-368 (LFDDEDESDLF) match the LFa 1 motif. Low complexity predominate over residues 379–399 (APVSEESSSPKPGKKIPAGAV). A phosphoserine mark is found at Ser-385 and Ser-387. Short sequence motifs (LFa) lie at residues 433–445 (LFDD…DNFF) and 464–473 (IFDDEEGDLF). Residues 500–518 (TLPSSKNPKLVSETKTQKG) show a composition bias toward polar residues. Short sequence motifs (LFa) lie at residues 519-530 (LFSDEEDSEDLF) and 554-565 (LFGDEDEEDNLF). Phosphoserine is present on residues Ser-521 and Ser-526. The span at 529 to 548 (LFSSQNSSKSKSASLLSSQL) shows a compositional bias: low complexity. Residues 569 to 582 (PAKKQVSSQQPQSQ) are compositionally biased toward low complexity. A compositionally biased stretch (basic and acidic residues) spans 583-592 (EKPKPSEQPK). The short motif at 599–611 (LFSSDEEDQWNIT) is the LFa 6 element. Ser-601 and Ser-602 each carry phosphoserine. A compositionally biased stretch (basic and acidic residues) spans 613 to 627 (SHTKLATDRKSKGEL). 2 consecutive short sequence motifs (LFa) follow at residues 646–657 (LFEEDDDEADLF) and 673–685 (LFED…SSLF). The disordered stretch occupies residues 667–817 (TQRTSLLFED…GRPKSTGVFQ (151 aa)). Ser-710 is subject to Phosphoserine. Residues 717–744 (VPSRVKSVDVKVGNGKEADVAKVTEKEG) show a composition bias toward basic and acidic residues. Phosphoserine occurs at positions 763 and 778. Basic and acidic residues predominate over residues 788–810 (EDQSNTHVSKNDAEKGLKTDGRP). 2 consecutive short sequence motifs (LFa) follow at residues 815–823 (VFQDEELLF) and 832–838 (DPDVDLF). The residue at position 853 (Ser-853) is a Phosphoserine. Positions 854–864 (LFGDDEDYDLF) match the LFa 11 motif. 2 disordered regions span residues 867-926 (AKTQ…REPS) and 960-1079 (ELAF…AAPP). A compositionally biased stretch (basic and acidic residues) spans 874 to 906 (PEKKGALKKDRPVSLKNEEAPESTEGSKEKSLW). The interaction with phospholipids stretch occupies residues 912 to 1317 (QDSSGLTPFK…DDPLNAFGSQ (406 aa)). The span at 1003–1021 (NKSRVKVRGKRRPQTRAAR) shows a compositional bias: basic residues. Residues 1004-1022 (KSRVKVRGKRRPQTRAARR) form a required for interaction with F-actin-capping protein subunit alpha (CAPZA1 or CAPZA2 or CAPZA3) region. Phosphoserine is present on residues Ser-1029, Ser-1047, Ser-1064, and Ser-1092. The LFa 12 motif lies at 1107 to 1114 (LFDSGDIF). Residues 1119–1141 (GSQSMEGTKVKAAETPAHLSGGS) are disordered. 6 consecutive short sequence motifs (LFa) follow at residues 1147 to 1161 (VFPA…DDLF), 1177 to 1185 (LLEDEDDLF), 1210 to 1216 (IFEDDIF), 1238 to 1246 (LFDDNIDIF), 1266 to 1275 (VFDDDTDDIF), and 1306 to 1314 (IFDDPLNAF). Ser-1152, Ser-1155, and Ser-1156 each carry phosphoserine. The disordered stretch occupies residues 1158–1183 (DDLFQTVKPRPAKKRNPFPLLEDEDD). A disordered region spans residues 1277–1317 (SGLQAKKSKPKSQSAEATSELRSDHKVSNIFDDPLNAFGSQ). Phosphoserine is present on Ser-1316.

The protein belongs to the FAM21 family. As to quaternary structure, component of the WASH core complex also described as WASH regulatory complex SHRC composed of WASHC1, WASHC2, WASHC3, WASHC4 and WASHC5; in the complex interacts (via N-terminus) directly with WASHC1. The WASH core complex associates via WASHC2 with the F-actin-capping protein dimer (formed by CAPZA1, CAPZA2 or CAPZA3 and CAPZB) in a transient or substoichiometric manner which was initially described as WASH complex. Interacts with VPS35; mediates the association with the retromer CSC complex. Interacts with FKBP15. Interacts with CCDC93, CCDC22, C16orf62 homolog; indicative for an association of the WASH core complex with the CCC complex. Directly interacts with TBC1D23.

The protein resides in the early endosome membrane. Its subcellular location is the cell membrane. Its function is as follows. Acts as a component of the WASH core complex that functions as a nucleation-promoting factor (NPF) at the surface of endosomes, where it recruits and activates the Arp2/3 complex to induce actin polymerization, playing a key role in the fission of tubules that serve as transport intermediates during endosome sorting. Mediates the recruitment of the WASH core complex to endosome membranes via binding to phospholipids and VPS35 of the retromer CSC. Mediates the recruitment of the F-actin-capping protein dimer to the WASH core complex probably promoting localized F-actin polymerization needed for vesicle scission. Via its C-terminus binds various phospholipids, most strongly phosphatidylinositol 4-phosphate (PtdIns-(4)P), phosphatidylinositol 5-phosphate (PtdIns-(5)P) and phosphatidylinositol 3,5-bisphosphate (PtdIns-(3,5)P2). Involved in the endosome-to-plasma membrane trafficking and recycling of SNX27-retromer-dependent cargo proteins, such as GLUT1. Required for the association of DNAJC13, ENTR1, ANKRD50 with retromer CSC subunit VPS35. Required for the endosomal recruitment of CCC complex subunits COMMD1, CCDC93 and C16orf62 homolog. This Cricetulus griseus (Chinese hamster) protein is WASH complex subunit 2.